The following is a 485-amino-acid chain: Terminase, large subunit (485 aa).

ADP-binding positions include 17-22 (KPHHVQ), 40-45 (QSGKSE), and arginine 79. The interval 22–197 (QLAIHRSTAK…EFFLMGWRGG (176 aa)) is ATPase activity. Residues glutamine 97 and glutamine 99 each contribute to the ATP site. The short motif at 125-131 (SEFRGKS) is the Walker A motif element. The Walker B motif motif lies at 145 to 150 (FVILDE). Residue glutamate 150 is the For ATPase activity of the active site. The interval 256 to 438 (SNSVFSGLDM…DIVMSLALAY (183 aa)) is nuclease. Residues aspartate 294, aspartate 347, and aspartate 429 each coordinate Mg(2+).

Belongs to the Tequatrovirus large terminase family. Interacts with the terminase small subunit; the active complex is composed of a pentamer of terminase large subunits and a dodecamer of terminase small subunits. Interacts with the portal protein. Mg(2+) serves as cofactor.

Functionally, the terminase large subunit acts as an ATP driven molecular motor necessary for viral DNA translocation into empty capsids and as an endonuclease that cuts the viral genome to initiate and to end a packaging reaction The terminase lies at a unique vertex of the procapsid and is composed of two subunits, a small terminase subunit involved in viral DNA recognition (packaging sequence), and a large terminase subunit possessing endonucleolytic and ATPase activities. Both terminase subunits heterooligomerize and are docked on the portal protein to form the packaging machine. The terminase large subunit exhibits endonuclease activity and cleaves the viral genome concatemer. Once the capsid is packaged with the DNA, the terminase complex is substituted by the tail. This chain is Terminase, large subunit, found in Thermus thermophilus (Thermus thermophilus phage P23-45).